The sequence spans 743 residues: Conserved oligomeric Golgi complex subunit 8 (743 aa).

Disordered regions lie at residues 549–672 (EDGP…TEPE) and 704–743 (TQDD…KKDD). Composition is skewed to basic and acidic residues over residues 563 to 581 (ESVK…HGTD), 594 to 621 (PVKE…HETP), 633 to 647 (SEAK…HLEL), and 654 to 664 (QEIREQEHKEV). Over residues 704–726 (TQDDPIEEEEGWGWGDDDGEEQE) the composition is skewed to acidic residues. The segment covering 727-743 (ISSKEVESPKEKCKKDD) has biased composition (basic and acidic residues).

This sequence belongs to the COG8 family. Component of the conserved oligomeric Golgi complex which is composed of eight different subunits and is required for normal Golgi morphology and localization.

The protein localises to the golgi apparatus membrane. Its function is as follows. Required for normal Golgi function. The polypeptide is Conserved oligomeric Golgi complex subunit 8 (cogc-8) (Caenorhabditis elegans).